A 102-amino-acid chain; its full sequence is Large ribosomal subunit protein uL24 (102 aa).

Belongs to the universal ribosomal protein uL24 family. As to quaternary structure, part of the 50S ribosomal subunit.

Functionally, one of two assembly initiator proteins, it binds directly to the 5'-end of the 23S rRNA, where it nucleates assembly of the 50S subunit. One of the proteins that surrounds the polypeptide exit tunnel on the outside of the subunit. This Rhizobium johnstonii (strain DSM 114642 / LMG 32736 / 3841) (Rhizobium leguminosarum bv. viciae) protein is Large ribosomal subunit protein uL24.